The primary structure comprises 558 residues: MLPVNRARALLTILSQAKTLNHTQQVHAKVIIHGFEDEVVLGSSLTNAYIQSNRLDFATSSFNRIPCWKRNRHSWNTILSGYSKSKTCCYSDVLLLYNRMRRHCDGVDSFNLVFAIKACVGLGLLENGILIHGLAMKNGLDKDDYVAPSLVEMYAQLGTMESAQKVFDEIPVRNSVLWGVLMKGYLKYSKDPEVFRLFCLMRDTGLALDALTLICLVKACGNVFAGKVGKCVHGVSIRRSFIDQSDYLQASIIDMYVKCRLLDNARKLFETSVDRNVVMWTTLISGFAKCERAVEAFDLFRQMLRESILPNQCTLAAILVSCSSLGSLRHGKSVHGYMIRNGIEMDAVNFTSFIDMYARCGNIQMARTVFDMMPERNVISWSSMINAFGINGLFEEALDCFHKMKSQNVVPNSVTFVSLLSACSHSGNVKEGWKQFESMTRDYGVVPEEEHYACMVDLLGRAGEIGEAKSFIDNMPVKPMASAWGALLSACRIHKEVDLAGEIAEKLLSMEPEKSSVYVLLSNIYADAGMWEMVNCVRRKMGIKGYRKHVGQSATEVG.

The transit peptide at M1–L79 directs the protein to the mitochondrion. PPR repeat units lie at residues E38 to W68, N71 to H103, D108 to K142, D143 to R173, N174 to L208, D209 to D243, S245 to R275, N276 to P310, N311 to M345, D346 to R376, N377 to P411, N412 to P447, and E448 to S482. The interval A483–G558 is type E motif.

It belongs to the PPR family. PCMP-E subfamily.

Its subcellular location is the mitochondrion. The chain is Pentatricopeptide repeat-containing protein At1g06140, mitochondrial (PCMP-E61) from Arabidopsis thaliana (Mouse-ear cress).